A 117-amino-acid polypeptide reads, in one-letter code: Ribosome-binding factor A (117 aa).

This sequence belongs to the RbfA family. As to quaternary structure, monomer. Binds 30S ribosomal subunits, but not 50S ribosomal subunits or 70S ribosomes.

The protein localises to the cytoplasm. Functionally, one of several proteins that assist in the late maturation steps of the functional core of the 30S ribosomal subunit. Associates with free 30S ribosomal subunits (but not with 30S subunits that are part of 70S ribosomes or polysomes). Required for efficient processing of 16S rRNA. May interact with the 5'-terminal helix region of 16S rRNA. The sequence is that of Ribosome-binding factor A from Nitrosomonas europaea (strain ATCC 19718 / CIP 103999 / KCTC 2705 / NBRC 14298).